Reading from the N-terminus, the 329-residue chain is tRNA uridine(34) hydroxylase (329 aa).

Residues 123–217 enclose the Rhodanese domain; that stretch reads SDPDVILVDT…YLEEVPEEES (95 aa). Cys-177 acts as the Cysteine persulfide intermediate in catalysis. A disordered region spans residues 285 to 329; it reads REKQVQLSNARGETHVGGDAAHLIDQRKKEKLAHKEQQRSGKKAK. Residues 296-323 are compositionally biased toward basic and acidic residues; sequence GETHVGGDAAHLIDQRKKEKLAHKEQQR.

The protein belongs to the TrhO family.

It catalyses the reaction uridine(34) in tRNA + AH2 + O2 = 5-hydroxyuridine(34) in tRNA + A + H2O. In terms of biological role, catalyzes oxygen-dependent 5-hydroxyuridine (ho5U) modification at position 34 in tRNAs. In Vibrio atlanticus (strain LGP32) (Vibrio splendidus (strain Mel32)), this protein is tRNA uridine(34) hydroxylase.